A 293-amino-acid polypeptide reads, in one-letter code: 33 kDa chaperonin (293 aa).

Disulfide bonds link Cys236/Cys238 and Cys269/Cys272.

This sequence belongs to the HSP33 family. Under oxidizing conditions two disulfide bonds are formed involving the reactive cysteines. Under reducing conditions zinc is bound to the reactive cysteines and the protein is inactive.

Its subcellular location is the cytoplasm. Functionally, redox regulated molecular chaperone. Protects both thermally unfolding and oxidatively damaged proteins from irreversible aggregation. Plays an important role in the bacterial defense system toward oxidative stress. The polypeptide is 33 kDa chaperonin (Lactobacillus delbrueckii subsp. bulgaricus (strain ATCC BAA-365 / Lb-18)).